Consider the following 893-residue polypeptide: TBC domain-containing protein kinase-like protein (893 aa).

Residues 1 to 273 enclose the Protein kinase domain; the sequence is MFPLKDAEMG…PDQLMKDKVF (273 aa). The Rab-GAP TBC domain occupies 466 to 651; it reads DIPPLMRGLT…HLWDTLLLGN (186 aa). A disordered region spans residues 710 to 749; that stretch reads YRQHAQPPKPSSDSSGGRSSAPYFSAECPDPPKTDLSRES. The span at 720–729 shows a compositional bias: low complexity; it reads SSDSSGGRSS. The region spanning 790–889 is the Rhodanese domain; that stretch reads SKPKLLVVDI…IKPTGLLTIP (100 aa).

Belongs to the protein kinase superfamily. As to quaternary structure, component of the FERRY complex composed of five subunits, TBCK, PPP1R21, FERRY3, CRYZL1 and GATD1 with a ratio of 1:2:1:2:4, respectively.

The protein resides in the cytoplasm. It localises to the cytoskeleton. Its subcellular location is the spindle. It is found in the midbody. The protein localises to the early endosome. Component of the FERRY complex (Five-subunit Endosomal Rab5 and RNA/ribosome intermediary). The FERRY complex directly interacts with mRNAs and RAB5A, and functions as a RAB5A effector involved in the localization and the distribution of specific mRNAs most likely by mediating their endosomal transport. The complex recruits mRNAs and ribosomes to early endosomes through direct mRNA-interaction. Also involved in the modulation of mTOR signaling and expression of mTOR complex components. Involved in the control of actin-cytoskeleton organization. This is TBC domain-containing protein kinase-like protein from Homo sapiens (Human).